The chain runs to 469 residues: Aryl-phospho-beta-D-glucosidase BglH (469 aa).

Glu-175 serves as the catalytic Proton donor. Residue Glu-368 is the Nucleophile of the active site.

It belongs to the glycosyl hydrolase 1 family.

The enzyme catalyses 6-phospho-beta-D-glucosyl-(1-&gt;4)-D-glucose + H2O = D-glucose 6-phosphate + D-glucose. In terms of biological role, catalyzes the hydrolysis of aryl-phospho-beta-D-glucosides such as 4-methylumbelliferyl-phospho-beta-D-glucopyranoside (MUG-P), phosphoarbutin and phosphosalicin. Plays a major role in the utilization of arbutin or salicin as the sole carbon source. BglA and BglH are the major proteins contributing to hydrolysis of MUG-P by extracts of late-exponential-phase or stationary-phase B.subtilis cells. The protein is Aryl-phospho-beta-D-glucosidase BglH (bglH) of Bacillus subtilis (strain 168).